Here is a 233-residue protein sequence, read N- to C-terminus: Small ribosomal subunit protein uS2 (233 aa).

This sequence belongs to the universal ribosomal protein uS2 family.

The protein is Small ribosomal subunit protein uS2 of Clostridium beijerinckii (strain ATCC 51743 / NCIMB 8052) (Clostridium acetobutylicum).